We begin with the raw amino-acid sequence, 411 residues long: Heparan-sulfate 6-O-sulfotransferase 1 (411 aa).

At 1-19 (MRRRRAGGRTMVERASKFV) the chain is on the cytoplasmic side. A helical; Signal-anchor for type II membrane protein membrane pass occupies residues 20 to 37 (LVVAGSACFMLILYQYAG). The Lumenal portion of the chain corresponds to 38–411 (PGLSLGAPGG…DYMSHIIEKW (374 aa)). 93–101 (HIQKTGGTT) contributes to the 3'-phosphoadenylyl sulfate binding site. Substrate is bound by residues 123 to 124 (KK), Arg140, Trp145, and His150. Catalysis depends on His150, which acts as the Proton acceptor. 3'-phosphoadenylyl sulfate contacts are provided by Arg185 and Ser193. 2 residues coordinate substrate: His197 and Trp204. Residue Asn264 is glycosylated (N-linked (GlcNAc...) asparagine). 317-319 (MQY) is a 3'-phosphoadenylyl sulfate binding site. Asn320 carries an N-linked (GlcNAc...) asparagine glycan. 3'-phosphoadenylyl sulfate is bound at residue 323 to 324 (RA). Positions 352–386 (KDLFQQRYQYKRQLERREQRLRNREERLLHRSKEA) form a coiled coil. Residues 380–401 (LHRSKEALPREDPEEPGRVPTE) form a disordered region.

It belongs to the sulfotransferase 6 family. In terms of processing, N-glycosylated. As to expression, expressed in fetal brain and liver.

Its subcellular location is the membrane. It carries out the reaction alpha-D-glucosaminyl-[heparan sulfate](n) + 3'-phosphoadenylyl sulfate = 6-sulfo-alpha-D-glucosaminyl-[heparan sulfate](n) + adenosine 3',5'-bisphosphate + H(+). In terms of biological role, 6-O-sulfation enzyme which catalyzes the transfer of sulfate from 3'-phosphoadenosine 5'-phosphosulfate (PAPS) to position 6 of the N-sulfoglucosamine residue (GlcNS) of heparan sulfate. Critical for normal neuronal development where it may play a role in neuron branching. May also play a role in limb development. May prefer iduronic acid. The polypeptide is Heparan-sulfate 6-O-sulfotransferase 1 (Mus musculus (Mouse)).